The primary structure comprises 168 residues: Ubiquitin-fold modifier-conjugating enzyme 1 (168 aa).

Cys119 acts as the Glycyl thioester intermediate in catalysis.

The protein belongs to the ubiquitin-conjugating enzyme family. UFC1 subfamily.

Functionally, E2-like enzyme which forms an intermediate with UFM1 via a thioester linkage. The chain is Ubiquitin-fold modifier-conjugating enzyme 1 from Drosophila grimshawi (Hawaiian fruit fly).